The chain runs to 741 residues: Catalase-peroxidase 2 (741 aa).

Positions 1 to 27 (MKINTLPTLSALTLAMSLALGAGMATA) are cleaved as a signal peptide. The segment at residues 106–229 (WHSAGVYRIF…MGATQMGLIY (124 aa)) is a cross-link (tryptophyl-tyrosyl-methioninium (Trp-Tyr) (with M-255)). His107 acts as the Proton acceptor in catalysis. The tryptophyl-tyrosyl-methioninium (Tyr-Met) (with W-106) cross-link spans 229–255 (YVNPEGPNGVPDPLASAKEIRDTFGRM). Residue His270 participates in heme b binding.

This sequence belongs to the peroxidase family. Peroxidase/catalase subfamily. Homodimer or homotetramer. Requires heme b as cofactor. In terms of processing, formation of the three residue Trp-Tyr-Met cross-link is important for the catalase, but not the peroxidase activity of the enzyme.

The catalysed reaction is H2O2 + AH2 = A + 2 H2O. It catalyses the reaction 2 H2O2 = O2 + 2 H2O. In terms of biological role, bifunctional enzyme with both catalase and broad-spectrum peroxidase activity. The chain is Catalase-peroxidase 2 from Shewanella oneidensis (strain ATCC 700550 / JCM 31522 / CIP 106686 / LMG 19005 / NCIMB 14063 / MR-1).